We begin with the raw amino-acid sequence, 742 residues long: Phosphoribosylformylglycinamidine synthase subunit PurL (742 aa).

The active site involves His-50. Residues Tyr-53 and Lys-92 each contribute to the ATP site. Residue Glu-94 coordinates Mg(2+). Substrate is bound by residues 95-98 and Arg-117; that span reads SHNH. Catalysis depends on His-96, which acts as the Proton acceptor. Residue Asp-118 coordinates Mg(2+). A substrate-binding site is contributed by Gln-241. Residue Asp-269 coordinates Mg(2+). 313 to 315 provides a ligand contact to substrate; sequence ESQ. ATP contacts are provided by Asp-494 and Gly-531. Asn-532 serves as a coordination point for Mg(2+). Ser-534 contacts substrate.

It belongs to the FGAMS family. As to quaternary structure, monomer. Part of the FGAM synthase complex composed of 1 PurL, 1 PurQ and 2 PurS subunits.

The protein resides in the cytoplasm. The enzyme catalyses N(2)-formyl-N(1)-(5-phospho-beta-D-ribosyl)glycinamide + L-glutamine + ATP + H2O = 2-formamido-N(1)-(5-O-phospho-beta-D-ribosyl)acetamidine + L-glutamate + ADP + phosphate + H(+). It participates in purine metabolism; IMP biosynthesis via de novo pathway; 5-amino-1-(5-phospho-D-ribosyl)imidazole from N(2)-formyl-N(1)-(5-phospho-D-ribosyl)glycinamide: step 1/2. Functionally, part of the phosphoribosylformylglycinamidine synthase complex involved in the purines biosynthetic pathway. Catalyzes the ATP-dependent conversion of formylglycinamide ribonucleotide (FGAR) and glutamine to yield formylglycinamidine ribonucleotide (FGAM) and glutamate. The FGAM synthase complex is composed of three subunits. PurQ produces an ammonia molecule by converting glutamine to glutamate. PurL transfers the ammonia molecule to FGAR to form FGAM in an ATP-dependent manner. PurS interacts with PurQ and PurL and is thought to assist in the transfer of the ammonia molecule from PurQ to PurL. The sequence is that of Phosphoribosylformylglycinamidine synthase subunit PurL from Sinorhizobium fredii (strain NBRC 101917 / NGR234).